The sequence spans 144 residues: Large ribosomal subunit protein uL15 (144 aa).

Residues 1–54 (MRLNTLSPAPGRVSAKKRVGRGIGSGLGKTAGRGHKGLKSRSGGSVKPGFEGGQ) form a disordered region. The segment covering 21-31 (RGIGSGLGKTA) has biased composition (gly residues).

The protein belongs to the universal ribosomal protein uL15 family. As to quaternary structure, part of the 50S ribosomal subunit.

In terms of biological role, binds to the 23S rRNA. The polypeptide is Large ribosomal subunit protein uL15 (Saccharophagus degradans (strain 2-40 / ATCC 43961 / DSM 17024)).